The sequence spans 317 residues: Ribosomal RNA small subunit methyltransferase H (317 aa).

Residues Gly32–His34, Asp51, Phe78, Asp99, and Gln106 each bind S-adenosyl-L-methionine.

Belongs to the methyltransferase superfamily. RsmH family.

Its subcellular location is the cytoplasm. The catalysed reaction is cytidine(1402) in 16S rRNA + S-adenosyl-L-methionine = N(4)-methylcytidine(1402) in 16S rRNA + S-adenosyl-L-homocysteine + H(+). Specifically methylates the N4 position of cytidine in position 1402 (C1402) of 16S rRNA. This Helicobacter hepaticus (strain ATCC 51449 / 3B1) protein is Ribosomal RNA small subunit methyltransferase H.